Here is a 294-residue protein sequence, read N- to C-terminus: Probable 2-(5''-triphosphoribosyl)-3'-dephosphocoenzyme-A synthase (294 aa).

Belongs to the CitG/MdcB family.

The catalysed reaction is 3'-dephospho-CoA + ATP = 2'-(5''-triphospho-alpha-D-ribosyl)-3'-dephospho-CoA + adenine. This Streptococcus equi subsp. zooepidemicus (strain H70) protein is Probable 2-(5''-triphosphoribosyl)-3'-dephosphocoenzyme-A synthase.